We begin with the raw amino-acid sequence, 780 residues long: ATP-dependent 6-phosphofructokinase, muscle type (780 aa).

Threonine 2 bears the N-acetylthreonine mark. The interval 2-390 (THEEHHAAKT…NWEVYKLLAH (389 aa)) is N-terminal catalytic PFK domain 1. ATP-binding positions include glycine 25, 88–89 (RC), and 118–121 (GDGS). Residue aspartate 119 participates in Mg(2+) binding. The residue at position 133 (serine 133) is a Phosphoserine. Residues 164 to 166 (SID), arginine 201, 208 to 210 (MGR), glutamate 264, arginine 292, and 298 to 301 (HVQR) each bind substrate. Residue aspartate 166 is the Proton acceptor of the active site. A Phosphoserine modification is found at serine 377. The interdomain linker stretch occupies residues 391 to 401 (VRPPVSKGGLH). A C-terminal regulatory PFK domain 2 region spans residues 402-780 (TVAVMNVGAP…SRKRSGEAAV (379 aa)). Residues arginine 471 and 528–532 (TVSNN) each bind beta-D-fructose 2,6-bisphosphate. The O-linked (GlcNAc) serine glycan is linked to serine 530. An N6-(2-hydroxyisobutyryl)lysine modification is found at lysine 557. Beta-D-fructose 2,6-bisphosphate contacts are provided by residues arginine 566, 573–575 (MGG), glutamate 629, arginine 655, and 661–664 (HMQQ). A Phosphoserine modification is found at serine 667. Arginine 735 lines the beta-D-fructose 2,6-bisphosphate pocket. Serine 775 carries the post-translational modification Phosphoserine.

The protein belongs to the phosphofructokinase type A (PFKA) family. ATP-dependent PFK group I subfamily. Eukaryotic two domain clade 'E' sub-subfamily. In terms of assembly, homo- and heterotetramers. Phosphofructokinase (PFK) enzyme functions as a tetramer composed of different combinations of 3 types of subunits, called PFKM (M), PFKL (L) and PFKP (P). The composition of the PFK tetramer differs according to the tissue type it is present in. The kinetic and regulatory properties of the tetrameric enzyme are dependent on the subunit composition, hence can vary across tissues. Isoform 2 and isoform 3 interact (via N-terminal testis-specific region) with GSTM5. Isoform 2 and isoform 3 interact (via C-terminus) with HK1 (via N-terminal spermatogenic cell-specific region). Mg(2+) is required as a cofactor. Post-translationally, glcNAcylation decreases enzyme activity. In terms of tissue distribution, isoform 1 is expressed in skeletal muscle (at protein level). Isoform 2 and isoform 3 are testis-specific and are detected in quiescent sperm (at protein level). They are first detected in the cytoplasm of round spermatids and subsequently in the flagellum of elongated spermatids extending into the seminiferous tubule lumen (at protein level). Isoform 2 is expressed at higher level than isoform 3 in testis.

The protein localises to the cytoplasm. It localises to the cell projection. It is found in the cilium. Its subcellular location is the flagellum. It catalyses the reaction beta-D-fructose 6-phosphate + ATP = beta-D-fructose 1,6-bisphosphate + ADP + H(+). The protein operates within carbohydrate degradation; glycolysis; D-glyceraldehyde 3-phosphate and glycerone phosphate from D-glucose: step 3/4. Its activity is regulated as follows. Allosterically activated by ADP, AMP, or fructose 2,6-bisphosphate, and allosterically inhibited by ATP or citrate. Its function is as follows. Catalyzes the phosphorylation of D-fructose 6-phosphate to fructose 1,6-bisphosphate by ATP, the first committing step of glycolysis. In Mus musculus (Mouse), this protein is ATP-dependent 6-phosphofructokinase, muscle type (Pfkm).